The chain runs to 320 residues: Porphobilinogen deaminase (320 aa).

Position 241 is an S-(dipyrrolylmethanemethyl)cysteine (C241).

Belongs to the HMBS family. Monomer. Dipyrromethane is required as a cofactor.

The enzyme catalyses 4 porphobilinogen + H2O = hydroxymethylbilane + 4 NH4(+). It participates in porphyrin-containing compound metabolism; protoporphyrin-IX biosynthesis; coproporphyrinogen-III from 5-aminolevulinate: step 2/4. Functionally, tetrapolymerization of the monopyrrole PBG into the hydroxymethylbilane pre-uroporphyrinogen in several discrete steps. In Thermobifida fusca (strain YX), this protein is Porphobilinogen deaminase.